Consider the following 88-residue polypeptide: Exodeoxyribonuclease 7 small subunit (88 aa).

This sequence belongs to the XseB family. As to quaternary structure, heterooligomer composed of large and small subunits.

The protein localises to the cytoplasm. The catalysed reaction is Exonucleolytic cleavage in either 5'- to 3'- or 3'- to 5'-direction to yield nucleoside 5'-phosphates.. Functionally, bidirectionally degrades single-stranded DNA into large acid-insoluble oligonucleotides, which are then degraded further into small acid-soluble oligonucleotides. The sequence is that of Exodeoxyribonuclease 7 small subunit from Tolumonas auensis (strain DSM 9187 / NBRC 110442 / TA 4).